A 391-amino-acid polypeptide reads, in one-letter code: Aspartate carbamoyltransferase 3, chloroplastic (391 aa).

The transit peptide at 1–69 (MTASSSLFSC…SKCDKMIKTR (69 aa)) directs the protein to the chloroplast. R137 and T138 together coordinate carbamoyl phosphate. Residues R137 and T138 each contribute to the UMP site. An L-aspartate-binding site is contributed by K167. Residues R188, H216, and Q219 each coordinate carbamoyl phosphate. Positions 188 and 216 each coordinate UMP. Residues R249 and R311 each coordinate UMP. R249 and R311 together coordinate L-aspartate. The carbamoyl phosphate site is built by L351 and P352.

Belongs to the aspartate/ornithine carbamoyltransferase superfamily. ATCase family. In terms of assembly, homotrimer.

Its subcellular location is the plastid. It localises to the chloroplast. It catalyses the reaction carbamoyl phosphate + L-aspartate = N-carbamoyl-L-aspartate + phosphate + H(+). It participates in pyrimidine metabolism; UMP biosynthesis via de novo pathway; (S)-dihydroorotate from bicarbonate: step 2/3. Feedback inhibited by UMP. Its function is as follows. Catalyzes the condensation of carbamoyl phosphate and aspartate to form carbamoyl aspartate and inorganic phosphate, the committed step in the de novo pyrimidine nucleotide biosynthesis pathway. In Pisum sativum (Garden pea), this protein is Aspartate carbamoyltransferase 3, chloroplastic (PYRB3).